Consider the following 338-residue polypeptide: Lipoate-protein ligase A (338 aa).

Residues 29-216 (PATQRVLFLW…AFFSHYGERV (188 aa)) enclose the BPL/LPL catalytic domain. ATP is bound by residues arginine 71, 76–79 (GAVF), and lysine 134. Lysine 134 provides a ligand contact to (R)-lipoate.

The protein belongs to the LplA family. In terms of assembly, monomer.

Its subcellular location is the cytoplasm. It carries out the reaction L-lysyl-[lipoyl-carrier protein] + (R)-lipoate + ATP = N(6)-[(R)-lipoyl]-L-lysyl-[lipoyl-carrier protein] + AMP + diphosphate + H(+). It functions in the pathway protein modification; protein lipoylation via exogenous pathway; protein N(6)-(lipoyl)lysine from lipoate: step 1/2. It participates in protein modification; protein lipoylation via exogenous pathway; protein N(6)-(lipoyl)lysine from lipoate: step 2/2. Catalyzes both the ATP-dependent activation of exogenously supplied lipoate to lipoyl-AMP and the transfer of the activated lipoyl onto the lipoyl domains of lipoate-dependent enzymes. The polypeptide is Lipoate-protein ligase A (Klebsiella pneumoniae subsp. pneumoniae (strain ATCC 700721 / MGH 78578)).